A 130-amino-acid polypeptide reads, in one-letter code: MARTAATKLALVPLVAAMLLVAADAHHLRPGELCLGPLRRLRKRQRHQPSAGCCSGVKRLAGLARSTADKQATCRCLKSVPARTTPAGPQASPPGAASASPTRSAPVSTALRSTDRTRAPHISSDRRLVG.

The N-terminal stretch at 1-25 is a signal peptide; sequence MARTAATKLALVPLVAAMLLVAADA. The segment at 80–130 is disordered; the sequence is VPARTTPAGPQASPPGAASASPTRSAPVSTALRSTDRTRAPHISSDRRLVG. Over residues 84-110 the composition is skewed to low complexity; it reads TTPAGPQASPPGAASASPTRSAPVSTA. Over residues 113-130 the composition is skewed to basic and acidic residues; the sequence is STDRTRAPHISSDRRLVG.

It belongs to the plant LTP family. As to expression, shoot meristem.

Functionally, possible dehydrative stress responsive protein. Not shown to have lipid transfer activity. This Hordeum vulgare (Barley) protein is Protein BLT4 (BLT4).